The chain runs to 356 residues: Uroporphyrinogen decarboxylase (356 aa).

Substrate contacts are provided by residues 27-31 (RQAGR), aspartate 77, tyrosine 154, serine 209, and histidine 327.

The protein belongs to the uroporphyrinogen decarboxylase family. As to quaternary structure, homodimer.

It is found in the cytoplasm. It catalyses the reaction uroporphyrinogen III + 4 H(+) = coproporphyrinogen III + 4 CO2. It participates in porphyrin-containing compound metabolism; protoporphyrin-IX biosynthesis; coproporphyrinogen-III from 5-aminolevulinate: step 4/4. Its function is as follows. Catalyzes the decarboxylation of four acetate groups of uroporphyrinogen-III to yield coproporphyrinogen-III. The polypeptide is Uroporphyrinogen decarboxylase (Aromatoleum aromaticum (strain DSM 19018 / LMG 30748 / EbN1) (Azoarcus sp. (strain EbN1))).